A 406-amino-acid polypeptide reads, in one-letter code: Argininosuccinate synthase (406 aa).

Residues 12–20 and Ala-39 each bind ATP; that span reads AYSGGLDTS. Positions 90 and 95 each coordinate L-citrulline. Gly-120 contributes to the ATP binding site. L-aspartate-binding residues include Thr-122, Asn-126, and Asp-127. Asn-126 lines the L-citrulline pocket. Residues Arg-130, Ser-179, Ser-188, Glu-264, and Tyr-276 each contribute to the L-citrulline site.

This sequence belongs to the argininosuccinate synthase family. Type 1 subfamily. In terms of assembly, homotetramer.

Its subcellular location is the cytoplasm. It carries out the reaction L-citrulline + L-aspartate + ATP = 2-(N(omega)-L-arginino)succinate + AMP + diphosphate + H(+). The protein operates within amino-acid biosynthesis; L-arginine biosynthesis; L-arginine from L-ornithine and carbamoyl phosphate: step 2/3. This Geotalea uraniireducens (strain Rf4) (Geobacter uraniireducens) protein is Argininosuccinate synthase.